We begin with the raw amino-acid sequence, 491 residues long: Acetyl-coenzyme A carboxylase carboxyl transferase subunit beta, chloroplastic (491 aa).

One can recognise a CoA carboxyltransferase N-terminal domain in the interval 224-491 (LWIQCENCYG…FFPLNPKKIK (268 aa)). Zn(2+) contacts are provided by C228, C231, C247, and C250. A C4-type zinc finger spans residues 228-250 (CENCYGLNYKKNLKSKINICEQC).

Belongs to the AccD/PCCB family. In terms of assembly, acetyl-CoA carboxylase is a heterohexamer composed of biotin carboxyl carrier protein, biotin carboxylase and 2 subunits each of ACCase subunit alpha and ACCase plastid-coded subunit beta (accD). Requires Zn(2+) as cofactor.

It is found in the plastid. It localises to the chloroplast stroma. It carries out the reaction N(6)-carboxybiotinyl-L-lysyl-[protein] + acetyl-CoA = N(6)-biotinyl-L-lysyl-[protein] + malonyl-CoA. It functions in the pathway lipid metabolism; malonyl-CoA biosynthesis; malonyl-CoA from acetyl-CoA: step 1/1. Functionally, component of the acetyl coenzyme A carboxylase (ACC) complex. Biotin carboxylase (BC) catalyzes the carboxylation of biotin on its carrier protein (BCCP) and then the CO(2) group is transferred by the transcarboxylase to acetyl-CoA to form malonyl-CoA. This is Acetyl-coenzyme A carboxylase carboxyl transferase subunit beta, chloroplastic from Vitis vinifera (Grape).